Here is a 477-residue protein sequence, read N- to C-terminus: Aspartyl/glutamyl-tRNA(Asn/Gln) amidotransferase subunit B (477 aa).

The protein belongs to the GatB/GatE family. GatB subfamily. As to quaternary structure, heterotrimer of A, B and C subunits.

The enzyme catalyses L-glutamyl-tRNA(Gln) + L-glutamine + ATP + H2O = L-glutaminyl-tRNA(Gln) + L-glutamate + ADP + phosphate + H(+). It carries out the reaction L-aspartyl-tRNA(Asn) + L-glutamine + ATP + H2O = L-asparaginyl-tRNA(Asn) + L-glutamate + ADP + phosphate + 2 H(+). Its function is as follows. Allows the formation of correctly charged Asn-tRNA(Asn) or Gln-tRNA(Gln) through the transamidation of misacylated Asp-tRNA(Asn) or Glu-tRNA(Gln) in organisms which lack either or both of asparaginyl-tRNA or glutaminyl-tRNA synthetases. The reaction takes place in the presence of glutamine and ATP through an activated phospho-Asp-tRNA(Asn) or phospho-Glu-tRNA(Gln). This chain is Aspartyl/glutamyl-tRNA(Asn/Gln) amidotransferase subunit B, found in Methylobacillus flagellatus (strain ATCC 51484 / DSM 6875 / VKM B-1610 / KT).